A 69-amino-acid chain; its full sequence is U2-agatoxin-Ao1g (69 aa).

The signal sequence occupies residues 1–20 (MKAIISLLLISAMVFSMIEA). The propeptide occupies 21–34 (VPVEEGLQLFEGER). Disulfide bonds link cysteine 36–cysteine 52, cysteine 43–cysteine 57, and cysteine 51–cysteine 67. Leucine amide is present on leucine 68.

This sequence belongs to the neurotoxin 01 (U2-agtx) family. As to expression, expressed by the venom gland.

The protein localises to the secreted. Insect active toxin causing rapid but reversible paralysis in crickets. No activity shown in mammals. Does not show effect on mammalian voltage-gated calcium channels. The sequence is that of U2-agatoxin-Ao1g from Agelena orientalis (Funnel-web spider).